A 689-amino-acid polypeptide reads, in one-letter code: Glycine--tRNA ligase beta subunit (689 aa).

The protein belongs to the class-II aminoacyl-tRNA synthetase family. As to quaternary structure, tetramer of two alpha and two beta subunits.

It is found in the cytoplasm. The catalysed reaction is tRNA(Gly) + glycine + ATP = glycyl-tRNA(Gly) + AMP + diphosphate. In Sodalis glossinidius (strain morsitans), this protein is Glycine--tRNA ligase beta subunit.